The following is a 337-amino-acid chain: uncharacterized protein (337 aa).

The interval 291 to 314 (NKTRQCSNTKTTTKSTMTPINNGF) is disordered. A compositionally biased stretch (low complexity) spans 299–308 (TKTTTKSTMT).

This is an uncharacterized protein from Acanthamoeba polyphaga mimivirus (APMV).